Consider the following 31-residue polypeptide: Photosystem II reaction center protein T (31 aa).

A helical transmembrane segment spans residues 3-23 (SFAYILILGLAIATLFFAIAF).

Belongs to the PsbT family. As to quaternary structure, PSII is composed of 1 copy each of membrane proteins PsbA, PsbB, PsbC, PsbD, PsbE, PsbF, PsbH, PsbI, PsbJ, PsbK, PsbL, PsbM, PsbT, PsbX, PsbY, PsbZ, Psb30/Ycf12, peripheral proteins PsbO, CyanoQ (PsbQ), PsbU, PsbV and a large number of cofactors. It forms dimeric complexes.

It localises to the cellular thylakoid membrane. Its function is as follows. Found at the monomer-monomer interface of the photosystem II (PS II) dimer, plays a role in assembly and dimerization of PSII. PSII is a light-driven water plastoquinone oxidoreductase, using light energy to abstract electrons from H(2)O, generating a proton gradient subsequently used for ATP formation. The sequence is that of Photosystem II reaction center protein T from Synechococcus sp. (strain CC9311).